Here is an 87-residue protein sequence, read N- to C-terminus: Small ribosomal subunit protein bS20 (87 aa).

The interval 1–27 (MANSVQATKRARQAEKHRQHNAGMRAA) is disordered. Over residues 9 to 20 (KRARQAEKHRQH) the composition is skewed to basic residues.

It belongs to the bacterial ribosomal protein bS20 family.

Its function is as follows. Binds directly to 16S ribosomal RNA. The protein is Small ribosomal subunit protein bS20 of Hydrogenovibrio crunogenus (strain DSM 25203 / XCL-2) (Thiomicrospira crunogena).